The chain runs to 79 residues: Putative membrane protein insertion efficiency factor (79 aa).

It belongs to the UPF0161 family.

It localises to the cell inner membrane. Functionally, could be involved in insertion of integral membrane proteins into the membrane. The sequence is that of Putative membrane protein insertion efficiency factor from Prochlorococcus marinus (strain NATL1A).